A 151-amino-acid polypeptide reads, in one-letter code: Small ribosomal subunit protein uS15 (151 aa).

This sequence belongs to the universal ribosomal protein uS15 family. In terms of assembly, component of the small ribosomal subunit.

It localises to the cytoplasm. Functionally, component of the small ribosomal subunit. The ribosome is a large ribonucleoprotein complex responsible for the synthesis of proteins in the cell. This is Small ribosomal subunit protein uS15 (rps13) from Xenopus laevis (African clawed frog).